We begin with the raw amino-acid sequence, 502 residues long: ATP synthase subunit alpha (502 aa).

169 to 176 (GDRQTGKT) provides a ligand contact to ATP.

This sequence belongs to the ATPase alpha/beta chains family. As to quaternary structure, F-type ATPases have 2 components, CF(1) - the catalytic core - and CF(0) - the membrane proton channel. CF(1) has five subunits: alpha(3), beta(3), gamma(1), delta(1), epsilon(1). CF(0) has three main subunits: a(1), b(2) and c(9-12). The alpha and beta chains form an alternating ring which encloses part of the gamma chain. CF(1) is attached to CF(0) by a central stalk formed by the gamma and epsilon chains, while a peripheral stalk is formed by the delta and b chains.

It localises to the cell membrane. It carries out the reaction ATP + H2O + 4 H(+)(in) = ADP + phosphate + 5 H(+)(out). Its function is as follows. Produces ATP from ADP in the presence of a proton gradient across the membrane. The alpha chain is a regulatory subunit. The sequence is that of ATP synthase subunit alpha from Streptococcus pyogenes serotype M18 (strain MGAS8232).